Reading from the N-terminus, the 309-residue chain is 4-hydroxy-3-methylbut-2-enyl diphosphate reductase (309 aa).

Cys-12 contacts [4Fe-4S] cluster. (2E)-4-hydroxy-3-methylbut-2-enyl diphosphate-binding residues include His-41 and His-74. Positions 41 and 74 each coordinate dimethylallyl diphosphate. Isopentenyl diphosphate is bound by residues His-41 and His-74. [4Fe-4S] cluster is bound at residue Cys-96. His-124 contributes to the (2E)-4-hydroxy-3-methylbut-2-enyl diphosphate binding site. His-124 lines the dimethylallyl diphosphate pocket. An isopentenyl diphosphate-binding site is contributed by His-124. Glu-126 serves as the catalytic Proton donor. Position 167 (Thr-167) interacts with (2E)-4-hydroxy-3-methylbut-2-enyl diphosphate. A [4Fe-4S] cluster-binding site is contributed by Cys-197. 4 residues coordinate (2E)-4-hydroxy-3-methylbut-2-enyl diphosphate: Ser-225, Ser-226, Asn-227, and Ser-269. 4 residues coordinate dimethylallyl diphosphate: Ser-225, Ser-226, Asn-227, and Ser-269. Positions 225, 226, 227, and 269 each coordinate isopentenyl diphosphate.

This sequence belongs to the IspH family. It depends on [4Fe-4S] cluster as a cofactor.

It catalyses the reaction isopentenyl diphosphate + 2 oxidized [2Fe-2S]-[ferredoxin] + H2O = (2E)-4-hydroxy-3-methylbut-2-enyl diphosphate + 2 reduced [2Fe-2S]-[ferredoxin] + 2 H(+). The catalysed reaction is dimethylallyl diphosphate + 2 oxidized [2Fe-2S]-[ferredoxin] + H2O = (2E)-4-hydroxy-3-methylbut-2-enyl diphosphate + 2 reduced [2Fe-2S]-[ferredoxin] + 2 H(+). It participates in isoprenoid biosynthesis; dimethylallyl diphosphate biosynthesis; dimethylallyl diphosphate from (2E)-4-hydroxy-3-methylbutenyl diphosphate: step 1/1. It functions in the pathway isoprenoid biosynthesis; isopentenyl diphosphate biosynthesis via DXP pathway; isopentenyl diphosphate from 1-deoxy-D-xylulose 5-phosphate: step 6/6. In terms of biological role, catalyzes the conversion of 1-hydroxy-2-methyl-2-(E)-butenyl 4-diphosphate (HMBPP) into a mixture of isopentenyl diphosphate (IPP) and dimethylallyl diphosphate (DMAPP). Acts in the terminal step of the DOXP/MEP pathway for isoprenoid precursor biosynthesis. This Colwellia psychrerythraea (strain 34H / ATCC BAA-681) (Vibrio psychroerythus) protein is 4-hydroxy-3-methylbut-2-enyl diphosphate reductase.